The sequence spans 931 residues: Netrin receptor UNC5C (931 aa).

The first 40 residues, 1–40, serve as a signal peptide directing secretion; sequence MRKGLRATAARCGLGLGYLLQMLVLPALALLSASGTGSAA. Topologically, residues 41-380 are extracellular; it reads QDDEFFHELP…APDSDDVALY (340 aa). Residues 62–159 enclose the Ig-like domain; it reads PHFLIEPEEA…AGTTKSRKAY (98 aa). Intrachain disulfides connect cysteine 83–cysteine 144, cysteine 95–cysteine 142, cysteine 188–cysteine 239, cysteine 272–cysteine 309, cysteine 276–cysteine 313, cysteine 287–cysteine 299, cysteine 328–cysteine 362, cysteine 332–cysteine 367, and cysteine 340–cysteine 352. Residues 161–256 enclose the Ig-like C2-type domain; it reads RIAYLRKTFE…KRKSTTATVI (96 aa). A glycan (N-linked (GlcNAc...) asparagine) is linked at asparagine 236. 2 TSP type-1 domains span residues 260-314 and 316-368; these read NGGW…TLCP and DGRW…GLCM. N-linked (GlcNAc...) asparagine glycosylation is present at asparagine 361. Residues 381-401 traverse the membrane as a helical segment; it reads VGIVIAVTVCLAITVVVALFV. At 402–931 the chain is on the cytoplasmic side; it reads YRKNHRDFES…VVSLAAEGQY (530 aa). Residues 402-931 form a required for netrin-mediated axon repulsion of neuronal growth cones region; sequence YRKNHRDFES…VVSLAAEGQY (530 aa). The residue at position 502 (serine 502) is a Phosphoserine. The 144-residue stretch at 530–673 folds into the ZU5 domain; sequence CTAFGTFNSL…LSTYALVGQS (144 aa). Tyrosine 568 is modified (phosphotyrosine). The interval 694-712 is interaction with DCC; that stretch reads SLEYSIRVYCLDDTQDALK. Residues 850–929 enclose the Death domain; it reads QKLCSSLDAP…ETVVSLAAEG (80 aa).

The protein belongs to the unc-5 family. Interacts with DCC (via cytoplasmic domain). Interacts (tyrosine phosphorylated form) with PTPN11. Interacts (via extracellular domain) with FLRT3 (via extracellular domain). Interacts (via Ig-like C2-type domain) with DSCAM (via extracellular domain). Interacts (via death domain) with DAPK1. Interacts (via cytoplasmic domain) with TUBB3; this interaction is decreased by NTN1/Netrin-1. Phosphorylated on different cytoplasmic tyrosine residues. Phosphorylation of Tyr-568 leads to an interaction with PTPN11 phosphatase, suggesting that its activity is regulated by phosphorylation/dephosphorylation. Tyrosine phosphorylation is netrin-dependent. Post-translationally, proteolytically cleaved by caspases during apoptosis. The cleavage does not take place when the receptor is associated with netrin ligand. Its cleavage by caspases is required to induce apoptosis. As to expression, expressed in cortical and cerebellar neurons, including cells of the external and internal granular layer and of the Purkinje cell layer (at protein level). Mainly expressed in regions of differentiating neurons. Highly expressed in brain and lung. Expressed in the cerebellum and the neurons of the hippocampus, with enrichment in neurons of the CA3 hippocampal pyramidal layer. Weakly expressed in testis, ovary, spleen, thymus and bladder. Expressed at very low level in kidney, intestine and salivary gland.

It is found in the cell membrane. The protein localises to the cell surface. It localises to the synapse. Its subcellular location is the synaptosome. The protein resides in the cell projection. It is found in the dendrite. The protein localises to the axon. It localises to the growth cone. Its subcellular location is the lamellipodium. The protein resides in the filopodium. Functionally, receptor for netrin required for axon guidance. Mediates axon repulsion of neuronal growth cones in the developing nervous system upon ligand binding. NTN1/Netrin-1 binding might cause dissociation of UNC5C from polymerized TUBB3 in microtubules and thereby lead to increased microtubule dynamics and axon repulsion. Axon repulsion in growth cones may also be caused by its association with DCC that may trigger signaling for repulsion. Might also collaborate with DSCAM in NTN1-mediated axon repulsion independently of DCC. Also involved in corticospinal tract axon guidance independently of DCC. Involved in dorsal root ganglion axon projection towards the spinal cord. It also acts as a dependence receptor required for apoptosis induction when not associated with netrin ligand. This chain is Netrin receptor UNC5C (Unc5c), found in Mus musculus (Mouse).